A 795-amino-acid polypeptide reads, in one-letter code: MGDEKDSWKVKTLDEILQEKKRRKEQEEKAEIKRLKNSDDRDSKRDSLEEGELRDHRMEITIRNSPYRREDSMEDRGEEDDSLAIKPPQQMSRKEKAHHRKDEKRKEKRRHRSHSAEGGKHARVKEKEREHERRKRHREEQDKARREWERQKRREMAREHSRRERDRLEQLERKRERERKMREQQKEQREQKERERRAEERRKEREARREVSAHHRTMREDYSDKVKASHWSRSPPRPPRERFELGDGRKPGEARPAPAQKPAQLKEEKMEERDLLSDLQDISDSERKTSSAESSSAESGSGSEEEEEEEEEEEEEGSTSEESEEEEEEEEEEEEETGSNSEEASEQSAEEVSEEEMSEDEERENENHLLVVPESRFDRDSGESEEAEEEVGEGTPQSSALTEGDYVPDSPALSPIELKQELPKYLPALQGCRSVEEFQCLNRIEEGTYGVVYRAKDKKTDEIVALKRLKMEKEKEGFPITSLREINTILKAQHPNIVTVREIVVGSNMDKIYIVMNYVEHDLKSLMETMKQPFLPGEVKTLMIQLLRGVKHLHDNWILHRDLKTSNLLLSHAGILKVGDFGLAREYGSPLKAYTPVVVTLWYRAPELLLGAKEYSTAVDMWSVGCIFGELLTQKPLFPGKSEIDQINKVFKDLGTPSEKIWPGYSELPAVKKMTFSEHPYNNLRKRFGALLSDQGFDLMNKFLTYFPGRRISAEDGLKHEYFRETPLPIDPSMFPTWPAKSEQQRVKRGTSPRPPEGGLGYSQLGDDDLKETGFHLTTTNQGASAAGPGFSLKF.

Residues 17–60 show a composition bias toward basic and acidic residues; sequence LQEKKRRKEQEEKAEIKRLKNSDDRDSKRDSLEEGELRDHRMEI. Residues 17-412 are disordered; that stretch reads LQEKKRRKEQ…EGDYVPDSPA (396 aa). Phosphoserine occurs at positions 47 and 72. A compositionally biased stretch (basic residues) spans 95–113; sequence EKAHHRKDEKRKEKRRHRS. Composition is skewed to basic and acidic residues over residues 114–131, 138–227, 238–253, and 264–276; these read HSAE…EREH, REEQ…DKVK, PPRE…KPGE, and QLKE…RDLL. S115 is subject to Phosphoserine. Position 283 is a phosphoserine (S283). Positions 291–302 are enriched in low complexity; the sequence is SAESSSAESGSG. 2 stretches are compositionally biased toward acidic residues: residues 303–364 and 383–392; these read SEEE…EERE and ESEEAEEEVG. The 286-residue stretch at 438–723 folds into the Protein kinase domain; that stretch reads FQCLNRIEEG…AEDGLKHEYF (286 aa). ATP-binding positions include 444-452 and K467; that span reads IEEGTYGVV. Phosphoserine; by CDK7 is present on S482. Position 488 is a phosphothreonine; by CDK7 (T488). The active-site Proton acceptor is the D562. S589 is modified (phosphoserine). Y594 carries the phosphotyrosine modification. T595 is modified (phosphothreonine). K641 is covalently cross-linked (Glycyl lysine isopeptide (Lys-Gly) (interchain with G-Cter in SUMO2)). A disordered region spans residues 733-795; that stretch reads SMFPTWPAKS…AAGPGFSLKF (63 aa). T751 bears the Phosphothreonine mark. S752 bears the Phosphoserine mark.

Belongs to the protein kinase superfamily. CMGC Ser/Thr protein kinase family. CDC2/CDKX subfamily. Cleaved isoform SV9 (p110C) binds to the serine/threonine kinase PAK1 and RANBP9. p110C interacts with RNPS1. Isoform 7, but not isoform SV9, nor its cleavage product p110C, interacts with CCND3. Interacts with CCNL1 and CCNL2. Forms complexes with pre-mRNA-splicing factors, including at least SRSF1, SRSF2 and SRSF7/SLU7. Interacts with isoform 5 of MYO18A. In terms of assembly, (Microbial infection) Interacts with human herpes virus 1 (HHV-1) transcriptional regulator ICP22. Mg(2+) serves as cofactor. Post-translationally, during FAS- or TNF-induced apoptosis, isoform SV9 is cleaved by caspases to produce p110C, a fragment that contains the C-terminal kinase domain. In terms of processing, phosphorylation at Ser-115 creates a binding site for 14-3-3 proteins. p110C can be autophosphorylated. Expressed ubiquitously. Some evidence of isoform-specific tissue distribution.

Its subcellular location is the cytoplasm. It is found in the nucleus. It catalyses the reaction L-seryl-[protein] + ATP = O-phospho-L-seryl-[protein] + ADP + H(+). The catalysed reaction is L-threonyl-[protein] + ATP = O-phospho-L-threonyl-[protein] + ADP + H(+). Phosphorylation at Thr-448 or Tyr-449 inactivates the enzyme, while phosphorylation at Thr-595 activates it. Its function is as follows. Plays multiple roles in cell cycle progression, cytokinesis and apoptosis. Involved in pre-mRNA splicing in a kinase activity-dependent manner. Isoform 7 may act as a negative regulator of normal cell cycle progression. In Homo sapiens (Human), this protein is Cyclin-dependent kinase 11B (CDK11B).